The following is a 432-amino-acid chain: MSSKNDQLFARAQLSTPGGVNSPVRAFRSVGGTPRFITKAEGPYFWDADDRRYIDYIGSWGPAIVGHAHPDVVKAVQDAATRGLSFGAPTEAEIEMAELICRLVPSIEQVRLVSSGTEAAMSALRLARGATGRDKIIKFEGCYHGHADSLLVKAGSGLLTFGNPTSAGVPEDFAKHTLVLDYNDPAQLENVFKEMGDSIACVIVEPVAGNMNLLPATPEFLQTMRRVCTQYGAVMILDEVMSGFRVALGGAQSLYGITPDLTVLGKVIGGGLPVAAFGGRADIMRHLAPLGGVYQAGTLSGNPVTVAAGMATLKLIQAPGFYENLTAQTTKLVHGFSAAAREADIAFCANSVGGMFGLYFASEVPVSYDTMMKCDKTRFNAFFHAMLDAGVYLAPSAFEAGFVSAQHDDAVIDSSIKAARAAFAQLADDCDD.

Residue Lys266 is modified to N6-(pyridoxal phosphate)lysine.

The protein belongs to the class-III pyridoxal-phosphate-dependent aminotransferase family. HemL subfamily. In terms of assembly, homodimer. Pyridoxal 5'-phosphate is required as a cofactor.

It localises to the cytoplasm. The enzyme catalyses (S)-4-amino-5-oxopentanoate = 5-aminolevulinate. The protein operates within porphyrin-containing compound metabolism; protoporphyrin-IX biosynthesis; 5-aminolevulinate from L-glutamyl-tRNA(Glu): step 2/2. In Janthinobacterium sp. (strain Marseille) (Minibacterium massiliensis), this protein is Glutamate-1-semialdehyde 2,1-aminomutase.